A 325-amino-acid chain; its full sequence is uncharacterized protein (325 aa).

A helical membrane pass occupies residues 67-87 (WIPFFLLFSSVVVLGGLWWLG).

The protein localises to the membrane. This is an uncharacterized protein from Synechocystis sp. (strain ATCC 27184 / PCC 6803 / Kazusa).